Here is a 228-residue protein sequence, read N- to C-terminus: Elongation factor 1-beta (228 aa).

Residues 74-116 (ASKAFTAYGPEGSEASANPKDKPAEEEEEEDLFASDSEDEDPA) are disordered. The segment at 84–93 (EGSEASANPK) is igE-binding. Residues 97–115 (AEEEEEEDLFASDSEDEDP) are compositionally biased toward acidic residues.

Belongs to the EF-1-beta/EF-1-delta family. As to quaternary structure, EF-1 is composed of 4 subunits: alpha, beta, delta, and gamma.

EF-1-beta and EF-1-delta stimulate the exchange of GDP bound to EF-1-alpha to GTP. The polypeptide is Elongation factor 1-beta (Penicillium citrinum).